Reading from the N-terminus, the 283-residue chain is uncharacterized protein (283 aa).

The segment covering 1–10 (MELNKTSESL) has biased composition (polar residues). 2 disordered regions span residues 1 to 99 (MELN…NPTS) and 255 to 283 (DQEG…EAHI). Basic and acidic residues-rich tracts occupy residues 14–34 (KIDH…REVR), 42–53 (SSTRQEKADRMP), and 61–71 (ESSKGSEEGAV).

The protein belongs to the chlamydial CPn_0705/CT_671/TC_0042 family.

This is an uncharacterized protein from Chlamydia trachomatis serovar D (strain ATCC VR-885 / DSM 19411 / UW-3/Cx).